Reading from the N-terminus, the 162-residue chain is Probable chemoreceptor glutamine deamidase CheD (162 aa).

It belongs to the CheD family.

It catalyses the reaction L-glutaminyl-[protein] + H2O = L-glutamyl-[protein] + NH4(+). Its function is as follows. Probably deamidates glutamine residues to glutamate on methyl-accepting chemotaxis receptors (MCPs), playing an important role in chemotaxis. In Clostridium botulinum (strain Alaska E43 / Type E3), this protein is Probable chemoreceptor glutamine deamidase CheD.